We begin with the raw amino-acid sequence, 234 residues long: Sugar fermentation stimulation protein A (234 aa).

A DNA-binding region (H-T-H motif) is located at residues 201-220 (LLSEAQQRGVEILAYKAEIS).

The protein belongs to the SfsA family.

Functionally, binds to DNA non-specifically. Could be a regulatory factor involved in maltose metabolism. The chain is Sugar fermentation stimulation protein A from Shigella flexneri serotype 5b (strain 8401).